The primary structure comprises 240 residues: Small ribosomal subunit protein uS3 (240 aa).

The region spanning 39–108 is the KH type-2 domain; sequence LRKFLKKKLY…ELILNIKEER (70 aa). Positions 213 to 224 are enriched in basic and acidic residues; sequence MNSDDTATPERK. Residues 213-240 are disordered; the sequence is MNSDDTATPERKAPRRRKGRRNVNAKKN. Residues 225–240 show a composition bias toward basic residues; that stretch reads APRRRKGRRNVNAKKN.

This sequence belongs to the universal ribosomal protein uS3 family. Part of the 30S ribosomal subunit. Forms a tight complex with proteins S10 and S14.

In terms of biological role, binds the lower part of the 30S subunit head. Binds mRNA in the 70S ribosome, positioning it for translation. The polypeptide is Small ribosomal subunit protein uS3 (Nautilia profundicola (strain ATCC BAA-1463 / DSM 18972 / AmH)).